A 585-amino-acid polypeptide reads, in one-letter code: Arginine--tRNA ligase (585 aa).

The short motif at 131-141 (ANPTGPMHVGH) is the 'HIGH' region element.

This sequence belongs to the class-I aminoacyl-tRNA synthetase family. In terms of assembly, monomer.

The protein resides in the cytoplasm. It carries out the reaction tRNA(Arg) + L-arginine + ATP = L-arginyl-tRNA(Arg) + AMP + diphosphate. In Bartonella tribocorum (strain CIP 105476 / IBS 506), this protein is Arginine--tRNA ligase.